Here is a 324-residue protein sequence, read N- to C-terminus: Holliday junction branch migration complex subunit RuvB (324 aa).

Positions 1-180 (MKSISCGKEY…FGIPLHLEFY (180 aa)) are large ATPase domain (RuvB-L). ATP-binding positions include Ile-19, Arg-20, Gly-61, Lys-64, Thr-65, Thr-66, 127–129 (EDF), Arg-170, Tyr-180, and Arg-217. Thr-65 serves as a coordination point for Mg(2+). The segment at 181–251 (SFEELVNIIK…VADSVLLKLG (71 aa)) is small ATPAse domain (RuvB-S). The head domain (RuvB-H) stretch occupies residues 254 to 324 (KMGLNKLDMN…TDQAKEYLSL (71 aa)). DNA is bound by residues Arg-307 and Arg-312.

It belongs to the RuvB family. Homohexamer. Forms an RuvA(8)-RuvB(12)-Holliday junction (HJ) complex. HJ DNA is sandwiched between 2 RuvA tetramers; dsDNA enters through RuvA and exits via RuvB. An RuvB hexamer assembles on each DNA strand where it exits the tetramer. Each RuvB hexamer is contacted by two RuvA subunits (via domain III) on 2 adjacent RuvB subunits; this complex drives branch migration. In the full resolvosome a probable DNA-RuvA(4)-RuvB(12)-RuvC(2) complex forms which resolves the HJ.

Its subcellular location is the cytoplasm. It carries out the reaction ATP + H2O = ADP + phosphate + H(+). Functionally, the RuvA-RuvB-RuvC complex processes Holliday junction (HJ) DNA during genetic recombination and DNA repair, while the RuvA-RuvB complex plays an important role in the rescue of blocked DNA replication forks via replication fork reversal (RFR). RuvA specifically binds to HJ cruciform DNA, conferring on it an open structure. The RuvB hexamer acts as an ATP-dependent pump, pulling dsDNA into and through the RuvAB complex. RuvB forms 2 homohexamers on either side of HJ DNA bound by 1 or 2 RuvA tetramers; 4 subunits per hexamer contact DNA at a time. Coordinated motions by a converter formed by DNA-disengaged RuvB subunits stimulates ATP hydrolysis and nucleotide exchange. Immobilization of the converter enables RuvB to convert the ATP-contained energy into a lever motion, pulling 2 nucleotides of DNA out of the RuvA tetramer per ATP hydrolyzed, thus driving DNA branch migration. The RuvB motors rotate together with the DNA substrate, which together with the progressing nucleotide cycle form the mechanistic basis for DNA recombination by continuous HJ branch migration. Branch migration allows RuvC to scan DNA until it finds its consensus sequence, where it cleaves and resolves cruciform DNA. This Wolbachia sp. subsp. Drosophila simulans (strain wRi) protein is Holliday junction branch migration complex subunit RuvB.